The primary structure comprises 365 residues: tRNA(Met) cytidine acetate ligase (365 aa).

ATP contacts are provided by residues 7-20, Gly-96, Asn-152, and Arg-175; that span reads IAEFNPFHNGHKYL.

This sequence belongs to the TmcAL family.

It is found in the cytoplasm. It catalyses the reaction cytidine(34) in elongator tRNA(Met) + acetate + ATP = N(4)-acetylcytidine(34) in elongator tRNA(Met) + AMP + diphosphate. Catalyzes the formation of N(4)-acetylcytidine (ac(4)C) at the wobble position of elongator tRNA(Met), using acetate and ATP as substrates. First activates an acetate ion to form acetyladenylate (Ac-AMP) and then transfers the acetyl group to tRNA to form ac(4)C34. The chain is tRNA(Met) cytidine acetate ligase from Streptococcus pneumoniae (strain Taiwan19F-14).